A 328-amino-acid chain; its full sequence is Glycerol-3-phosphate dehydrogenase [NAD(P)+] (328 aa).

Residues Trp-15, Arg-35, and Lys-108 each contribute to the NADPH site. 3 residues coordinate sn-glycerol 3-phosphate: Lys-108, Gly-136, and Ser-138. Ala-140 lines the NADPH pocket. Residues Lys-191, Asp-244, Ser-254, Arg-255, and Asn-256 each coordinate sn-glycerol 3-phosphate. Lys-191 serves as the catalytic Proton acceptor. Arg-255 contributes to the NADPH binding site. Leu-275 and Glu-277 together coordinate NADPH.

Belongs to the NAD-dependent glycerol-3-phosphate dehydrogenase family.

The protein resides in the cytoplasm. The enzyme catalyses sn-glycerol 3-phosphate + NAD(+) = dihydroxyacetone phosphate + NADH + H(+). The catalysed reaction is sn-glycerol 3-phosphate + NADP(+) = dihydroxyacetone phosphate + NADPH + H(+). It functions in the pathway membrane lipid metabolism; glycerophospholipid metabolism. Catalyzes the reduction of the glycolytic intermediate dihydroxyacetone phosphate (DHAP) to sn-glycerol 3-phosphate (G3P), the key precursor for phospholipid synthesis. The polypeptide is Glycerol-3-phosphate dehydrogenase [NAD(P)+] (Azorhizobium caulinodans (strain ATCC 43989 / DSM 5975 / JCM 20966 / LMG 6465 / NBRC 14845 / NCIMB 13405 / ORS 571)).